Reading from the N-terminus, the 307-residue chain is MWFKNLYFFAFTRPFEWSEQDLEKHLSEHLFTPLGSTEISHFGWINALGKHGDTSVHSANGNFLICARKEEKMLPASVIKDMIEEKVNLLEQEQGRGATKKEKEQFKEDITFELLPRAFSRITDTHAYISPVNNIIVINSSSRGKAEDLLALLRKVLGTLPVSSLEPDVCADETMTDWLNEKSLGGKFTLGMEAEFNALGDDGAVVRVKNQDLLSEEIKSHLDADKYVVKVALEWDESLSFILCDDLAIKRVKFFDVIHEQNDDIDSDDVIAKLDADFALMSGELNRFIIELLAEFSMKTTDLLEKD.

The protein belongs to the RdgC family.

Its subcellular location is the cytoplasm. The protein resides in the nucleoid. May be involved in recombination. The polypeptide is Recombination-associated protein RdgC (Colwellia psychrerythraea (strain 34H / ATCC BAA-681) (Vibrio psychroerythus)).